The following is a 390-amino-acid chain: Tryptophan synthase beta chain (390 aa).

An N6-(pyridoxal phosphate)lysine modification is found at Lys90.

This sequence belongs to the TrpB family. In terms of assembly, tetramer of two alpha and two beta chains. It depends on pyridoxal 5'-phosphate as a cofactor.

The enzyme catalyses (1S,2R)-1-C-(indol-3-yl)glycerol 3-phosphate + L-serine = D-glyceraldehyde 3-phosphate + L-tryptophan + H2O. The protein operates within amino-acid biosynthesis; L-tryptophan biosynthesis; L-tryptophan from chorismate: step 5/5. Its function is as follows. The beta subunit is responsible for the synthesis of L-tryptophan from indole and L-serine. This chain is Tryptophan synthase beta chain, found in Bacteroides fragilis (strain ATCC 25285 / DSM 2151 / CCUG 4856 / JCM 11019 / LMG 10263 / NCTC 9343 / Onslow / VPI 2553 / EN-2).